A 561-amino-acid polypeptide reads, in one-letter code: Dihydroxy-acid dehydratase 3 (561 aa).

Residue C50 coordinates [2Fe-2S] cluster. D82 serves as a coordination point for Mg(2+). C123 contributes to the [2Fe-2S] cluster binding site. Positions 124 and 125 each coordinate Mg(2+). At K125 the chain carries N6-carboxylysine. Residue C195 coordinates [2Fe-2S] cluster. E447 contacts Mg(2+). Catalysis depends on S473, which acts as the Proton acceptor.

The protein belongs to the IlvD/Edd family. In terms of assembly, homodimer. It depends on [2Fe-2S] cluster as a cofactor. Mg(2+) is required as a cofactor.

The catalysed reaction is (2R)-2,3-dihydroxy-3-methylbutanoate = 3-methyl-2-oxobutanoate + H2O. It catalyses the reaction (2R,3R)-2,3-dihydroxy-3-methylpentanoate = (S)-3-methyl-2-oxopentanoate + H2O. The protein operates within amino-acid biosynthesis; L-isoleucine biosynthesis; L-isoleucine from 2-oxobutanoate: step 3/4. It participates in amino-acid biosynthesis; L-valine biosynthesis; L-valine from pyruvate: step 3/4. In terms of biological role, functions in the biosynthesis of branched-chain amino acids. Catalyzes the dehydration of (2R,3R)-2,3-dihydroxy-3-methylpentanoate (2,3-dihydroxy-3-methylvalerate) into 2-oxo-3-methylpentanoate (2-oxo-3-methylvalerate) and of (2R)-2,3-dihydroxy-3-methylbutanoate (2,3-dihydroxyisovalerate) into 2-oxo-3-methylbutanoate (2-oxoisovalerate), the penultimate precursor to L-isoleucine and L-valine, respectively. The sequence is that of Dihydroxy-acid dehydratase 3 from Bordetella bronchiseptica (strain ATCC BAA-588 / NCTC 13252 / RB50) (Alcaligenes bronchisepticus).